A 949-amino-acid chain; its full sequence is Bifunctional glutamine synthetase adenylyltransferase/adenylyl-removing enzyme (949 aa).

The interval 1-450 is adenylyl removase; sequence MQNQGNKVLS…HFNATVGGTD (450 aa). Positions 455 to 949 are adenylyl transferase; it reads NDHWTALFWN…IEIYNEILAI (495 aa).

This sequence belongs to the GlnE family. Mg(2+) serves as cofactor.

It catalyses the reaction [glutamine synthetase]-O(4)-(5'-adenylyl)-L-tyrosine + phosphate = [glutamine synthetase]-L-tyrosine + ADP. It carries out the reaction [glutamine synthetase]-L-tyrosine + ATP = [glutamine synthetase]-O(4)-(5'-adenylyl)-L-tyrosine + diphosphate. In terms of biological role, involved in the regulation of glutamine synthetase GlnA, a key enzyme in the process to assimilate ammonia. When cellular nitrogen levels are high, the C-terminal adenylyl transferase (AT) inactivates GlnA by covalent transfer of an adenylyl group from ATP to specific tyrosine residue of GlnA, thus reducing its activity. Conversely, when nitrogen levels are low, the N-terminal adenylyl removase (AR) activates GlnA by removing the adenylyl group by phosphorolysis, increasing its activity. The regulatory region of GlnE binds the signal transduction protein PII (GlnB) which indicates the nitrogen status of the cell. The polypeptide is Bifunctional glutamine synthetase adenylyltransferase/adenylyl-removing enzyme (Shewanella frigidimarina (strain NCIMB 400)).